Here is a 1107-residue protein sequence, read N- to C-terminus: Copine family protein 1 (1107 aa).

At 1-22 (MVFDARLGYDPDEWEECPEPEH) the chain is on the extracellular side. Residues 23–45 (FLVFSGFTRYMLTFAAIAFVYYF) form a helical membrane-spanning segment. At 46-1107 (FKLLDDKNKK…IRREMMHNPL (1062 aa)) the chain is on the cytoplasmic side. Residues 67–124 (VESVLAKAGDKLHDVKEQVQQHIPESAEELMREADQYLKEQAHSVQNNVHQFAEQAAN) are a coiled coil. Residues 478-488 (QLQQNQQQHQQ) are compositionally biased toward low complexity. 2 disordered regions span residues 478–501 (QLQQ…TADS) and 673–698 (HEPE…SRQV). Over residues 492–501 (IDRRRTTADS) the composition is skewed to basic and acidic residues. The segment covering 687–698 (KNPSFEATSRQV) has biased composition (polar residues). Positions 863 to 1023 (NLIFGIDYTA…LSIIVVGVGD (161 aa)) constitute a VWFA domain.

This sequence belongs to the copine family. As to quaternary structure, may interact (via VWFA domain) with unc-89 (via Ig-like C2-type 1-3) and unc-96 (via C-terminus); cpna-1 binding sites for unc-89 and unc-96 are different. May interact with pat-6. May interact with lim-9 (via LIM domains) and with scpl-1 (via FCP1 homology domain). Expressed in body wall muscles (at protein level).

It localises to the basal cell membrane. Its subcellular location is the cytoplasm. The protein resides in the myofibril. It is found in the sarcomere. The protein localises to the m line. Functionally, involved in the assembly of dense bodies and M lines during body wall muscle development. Acts by recruiting downstream of integrin-associated protein pat-6/actopaxin several dense bodies and M line components including unc-89, lim-9, scpl-1 and unc-96 to integrin-mediated attachment sites. The protein is Copine family protein 1 of Caenorhabditis elegans.